Here is a 336-residue protein sequence, read N- to C-terminus: DNA repair protein RAD51 homolog A (336 aa).

In terms of domain architecture, HhH spans 45-74; that stretch reads TVEAVAYAPKKELLNIKGISEAKAEKILAE. Residue 124–131 coordinates ATP; it reads GEFRTGKT. Positions 242 to 257 match the Nuclear export signal motif; that stretch reads LARFLRMLLRLADEFG.

This sequence belongs to the RecA family. RAD51 subfamily. Forms linear homooligomers, giving rise to a RAD51 nucleoprotein filament, which is essential for strand-pairing reactions during DNA recombination.

The protein localises to the nucleus. Its subcellular location is the cytoplasm. It localises to the chromosome. Its function is as follows. Plays an important role in homologous strand exchange, a key step in DNA repair through homologous recombination (HR). Binds to single-stranded DNA in an ATP-dependent manner to form nucleoprotein filaments which are essential for the homology search and strand exchange. Catalyzes the recognition of homology and strand exchange between homologous DNA partners to form a joint molecule between a processed DNA break and the repair template. Recruited to resolve stalled replication forks during replication stress. Also involved in interstrand cross-link repair. This Xenopus laevis (African clawed frog) protein is DNA repair protein RAD51 homolog A (rad51-a).